Here is a 621-residue protein sequence, read N- to C-terminus: uncharacterized protein (621 aa).

Helical transmembrane passes span 240–260 (FFDA…NLLW), 548–568 (LGIV…VWTV), and 587–607 (VIIG…LTFM).

The protein localises to the cell membrane. This is an uncharacterized protein from Mycoplasma pneumoniae (strain ATCC 29342 / M129 / Subtype 1) (Mycoplasmoides pneumoniae).